The primary structure comprises 243 residues: Ribosomal RNA small subunit methyltransferase G (243 aa).

S-adenosyl-L-methionine contacts are provided by residues Gly-79, Phe-84, 130 to 131 (AE), and Arg-150. The interval 222 to 243 (KPTPNKYPRKPGIPNKQPLGGA) is disordered.

The protein belongs to the methyltransferase superfamily. RNA methyltransferase RsmG family.

It is found in the cytoplasm. Its function is as follows. Specifically methylates the N7 position of a guanine in 16S rRNA. This Lacticaseibacillus paracasei (strain ATCC 334 / BCRC 17002 / CCUG 31169 / CIP 107868 / KCTC 3260 / NRRL B-441) (Lactobacillus paracasei) protein is Ribosomal RNA small subunit methyltransferase G.